We begin with the raw amino-acid sequence, 1054 residues long: Acid trehalase (1054 aa).

The signal sequence occupies residues 1 to 21; that stretch reads MRFKSVFTLLPLLAQLPSGGA. N-linked (GlcNAc...) asparagine glycans are attached at residues Asn-47, Asn-135, Asn-176, Asn-283, and Asn-307. 448–449 is a binding site for substrate; it reads WD. Asn-493, Asn-513, Asn-570, and Asn-578 each carry an N-linked (GlcNAc...) asparagine glycan. Glu-584 serves as the catalytic Proton donor. Asn-618 and Asn-644 each carry an N-linked (GlcNAc...) asparagine glycan. A substrate-binding site is contributed by 650 to 651; that stretch reads KQ. N-linked (GlcNAc...) asparagine glycosylation is found at Asn-665, Asn-734, Asn-803, Asn-826, Asn-838, Asn-903, Asn-937, Asn-966, and Asn-992.

This sequence belongs to the glycosyl hydrolase 65 family.

It catalyses the reaction alpha,alpha-trehalose + H2O = alpha-D-glucose + beta-D-glucose. In Emericella nidulans (strain FGSC A4 / ATCC 38163 / CBS 112.46 / NRRL 194 / M139) (Aspergillus nidulans), this protein is Acid trehalase (treA).